The primary structure comprises 54 residues: Ovomucoid (54 aa).

The Kazal-like domain occupies 4–54 (VDCSDYPTHGCTLELKPICGSDNQTYSNKCGFCNAVAQSNGTLTLSHFGKC). Disulfide bonds link cysteine 6–cysteine 36, cysteine 14–cysteine 33, and cysteine 22–cysteine 54. Asparagine 43 carries N-linked (GlcNAc...) asparagine glycosylation.

It localises to the secreted. In Aepypodius arfakianus (Wattled brush turkey), this protein is Ovomucoid.